Reading from the N-terminus, the 220-residue chain is Nucleolar protein 3 (220 aa).

Residue G2 is the site of N-myristoyl glycine attachment. One can recognise a CARD domain in the interval 4 to 95 (VQERPSETID…MPDPAWDWQH (92 aa)). The interval 20–70 (VETLQADSGLLLDALVARGVLTGPEYEALDALPDAERRVRRLLLLVQSKGE) is essential for interaction with BAX. Residues 111 to 220 (GHWTPEAPSS…FQEEDESEDS (110 aa)) form a disordered region. T149 carries the phosphothreonine; by CK2 modification. Acidic residues predominate over residues 152-220 (EPELEAEATE…FQEEDESEDS (69 aa)).

As to quaternary structure, oligomerizes (via CARD doamin). Interacts (via CARD domain) with CASP2; inhibits CASP2 activity in a phosphorylation-dependent manner. Interacts with CASP8; decreases CASP8 activity in a mitochondria localization- and phosphorylation-dependent manner and this interaction is dissociated by calcium. Interacts with TFPT; translocates NOL3 into the nucleus and negatively regulated TFPT-induced cell death. Interacts directly (via CARD domain) with FAS and FADD (via DED domain); inhibits death-inducing signaling complex (DISC) assembly by inhibiting the increase in FAS-FADD binding induced by FAS activation. Interacts (via CARD domain) with BAX (via a C-terminal 33 residues); inhibits BAX activation and translocation and consequently cytochrome c release from mitochondria. Interacts with PPM1G; may dephosphorylate NOL3. Interacts (via CARD domain) with BBC3 (via BH3 domain); preventing the association of BBC3 with BCL2 and resulting in activation of CASP8. Interacts (via CARD domain) with BAD(via BH3 domain); preventing the association of BAD with BCL2. Interacts directly (via CARD domain) with TNFRSF1A; inhibits TNF-signaling pathway. Post-translationally, phosphorylation at Thr-149 is required for its antiapoptotic effect by blocking death-inducing signaling complex death-inducing signaling complex (DISC) activity through the control of interaction with CASP8. Phosphorylation at Thr-149 results in translocation to mitochondria and this translocation enables the binding to CASP8. Dephosphorylated at Thr-149 by calcineurin; doesn't inhibit the association between FADD and CASP8 and the consequent apoptosis. Polyubiquitinated by MDM2; promoting proteasomal-dependent degradation in response to apoptotic stimuli.

It localises to the cytoplasm. The protein resides in the mitochondrion. It is found in the sarcoplasmic reticulum. The protein localises to the membrane. Apoptosis repressor that blocks multiple modes of cell death. Inhibits extrinsic apoptotic pathways through two different ways. Firstly by interacting with FAS and FADD upon FAS activation blocking death-inducing signaling complex (DISC) assembly. Secondly by interacting with CASP8 in a mitochondria localization- and phosphorylation-dependent manner, limiting the amount of soluble CASP8 available for DISC-mediated activation. Inhibits intrinsic apoptotic pathway in response to a wide range of stresses, through its interaction with BAX resulting in BAX inactivation, preventing mitochondrial dysfunction and release of pro-apoptotic factors. Inhibits calcium-mediated cell death by functioning as a cytosolic calcium buffer, dissociating its interaction with CASP8 and maintaining calcium homeostasis. Negatively regulates oxidative stress-induced apoptosis by phosphorylation-dependent suppression of the mitochondria-mediated intrinsic pathway, by blocking CASP2 activation and BAX translocation. Negatively regulates hypoxia-induced apoptosis in part by inhibiting the release of cytochrome c from mitochondria in a caspase-independent manner. Also inhibits TNF-induced necrosis by preventing TNF-signaling pathway through TNFRSF1A interaction abrogating the recruitment of RIPK1 to complex I. Finally through its role as apoptosis repressor, promotes vascular remodeling through inhibition of apoptosis and stimulation of proliferation, in response to hypoxia. Inhibits too myoblast differentiation through caspase inhibition. This is Nucleolar protein 3 (Nol3) from Mus musculus (Mouse).